A 142-amino-acid polypeptide reads, in one-letter code: uncharacterized protein (142 aa).

This is an uncharacterized protein from Homo sapiens (Human).